The sequence spans 65 residues: KDGYPVIKTTGCKLICVGISDNKSCDRFCKKQGGSHGYCHAFGCWCEGLSGSTPTYPIPGKTCKK.

The region spanning 1–64 (KDGYPVIKTT…TYPIPGKTCK (64 aa)) is the LCN-type CS-alpha/beta domain. Intrachain disulfides connect Cys12-Cys63, Cys16-Cys39, Cys25-Cys44, and Cys29-Cys46.

The protein belongs to the long (4 C-C) scorpion toxin superfamily. Sodium channel inhibitor family. Expressed by the venom gland.

It is found in the secreted. Probable sodium channel inhibitor. The chain is Toxin NaTx-22 from Centruroides sculpturatus (Arizona bark scorpion).